Here is a 284-residue protein sequence, read N- to C-terminus: Putative cysteine-rich repeat secretory protein 7 (284 aa).

A signal peptide spans 1–24 (MARIILTAPLFYFFFSLLSHQTMS). Gnk2-homologous domains follow at residues 26–128 (PQHM…NVSF) and 134–244 (SKPV…TFVL). The tract at residues 247 to 284 (PAPSPSSLPPISPTSSPPLSLPPQLPPPLSQPPPPLST) is disordered.

The protein belongs to the cysteine-rich repeat secretory protein family.

Its subcellular location is the secreted. The polypeptide is Putative cysteine-rich repeat secretory protein 7 (CRRSP7) (Arabidopsis thaliana (Mouse-ear cress)).